A 411-amino-acid chain; its full sequence is NADH-quinone oxidoreductase subunit D 2 (411 aa).

It belongs to the complex I 49 kDa subunit family. NDH-1 is composed of 14 different subunits. Subunits NuoB, C, D, E, F, and G constitute the peripheral sector of the complex.

It is found in the cell membrane. It catalyses the reaction a quinone + NADH + 5 H(+)(in) = a quinol + NAD(+) + 4 H(+)(out). In terms of biological role, NDH-1 shuttles electrons from NADH, via FMN and iron-sulfur (Fe-S) centers, to quinones in the respiratory chain. The immediate electron acceptor for the enzyme in this species is believed to be ubiquinone. Couples the redox reaction to proton translocation (for every two electrons transferred, four hydrogen ions are translocated across the cytoplasmic membrane), and thus conserves the redox energy in a proton gradient. This Chloroflexus aurantiacus (strain ATCC 29366 / DSM 635 / J-10-fl) protein is NADH-quinone oxidoreductase subunit D 2.